The sequence spans 588 residues: Phosphatidylinositol-3,5-bisphosphate 3-phosphatase mtm-1 (588 aa).

Positions isoleucine 20–glycine 91 constitute a GRAM domain. The Myotubularin phosphatase domain maps to glycine 164–tyrosine 543. A 1,2-diacyl-sn-glycero-3-phospho-(1D-myo-inositol-3,5-bisphosphate) is bound by residues asparagine 293, asparagine 316, and isoleucine 317. Asparagine 293, asparagine 316, and isoleucine 317 together coordinate a 1,2-diacyl-sn-glycero-3-phospho-(1D-myo-inositol-3-phosphate). The active-site Phosphocysteine intermediate is cysteine 378. Residues serine 379, aspartate 380, glycine 381, tryptophan 382, aspartate 383, arginine 384, lysine 420, and arginine 424 each contribute to the a 1,2-diacyl-sn-glycero-3-phospho-(1D-myo-inositol-3,5-bisphosphate) site. Residues serine 379, aspartate 380, glycine 381, tryptophan 382, aspartate 383, and arginine 384 each contribute to the a 1,2-diacyl-sn-glycero-3-phospho-(1D-myo-inositol-3-phosphate) site. A phosphate-binding site is contributed by serine 379. Phosphate-binding residues include glycine 381, tryptophan 382, aspartate 383, and arginine 384. Arginine 424 lines the a 1,2-diacyl-sn-glycero-3-phospho-(1D-myo-inositol-3-phosphate) pocket. A coiled-coil region spans residues alanine 563–alanine 588.

This sequence belongs to the protein-tyrosine phosphatase family. Non-receptor class myotubularin subfamily. As to expression, expressed in embryo, larva and in adults. Expressed in a few head and tail neurons. Expressed in hypodermis, body wall and pharyngeal muscles, sheath cells, vulva, distal tip cells and coelomocytes.

The protein resides in the cell membrane. It is found in the cell projection. Its subcellular location is the phagocytic cup. The protein localises to the apical cell membrane. It localises to the cytoplasmic granule membrane. It catalyses the reaction a 1,2-diacyl-sn-glycero-3-phospho-(1D-myo-inositol-3,5-bisphosphate) + H2O = a 1,2-diacyl-sn-glycero-3-phospho-(1D-myo-inositol-5-phosphate) + phosphate. The catalysed reaction is a 1,2-diacyl-sn-glycero-3-phospho-(1D-myo-inositol-3-phosphate) + H2O = a 1,2-diacyl-sn-glycero-3-phospho-(1D-myo-inositol) + phosphate. The enzyme catalyses 1,2-dioctanoyl-sn-glycero-3-phospho-(1-D-myo-inositol-3-phosphate) + H2O = 1,2-dioctanoyl-sn-glycero-3-phospho-(1D-myo-inositol) + phosphate. Its function is as follows. Lipid phosphatase that specifically dephosphorylates phosphatidylinositol 3-phosphate (PI3P) and phosphatidylinositol 3,5-bisphosphate (PI(3,5)P2). Negatively regulates accumulation of PI3P on intracellular vesicles. Negatively regulates phagocytosis of apoptotic cells probably by limiting the recruitment and/or the activation of ced-5, ced-2 and ced-12 complex. In addition, may positively regulate phagosome maturation by promoting recycling of apoptotic receptor ced-1 back to the plasma membrane. Essential for embryonic and larval development. May promote migration of distal tip cells. The polypeptide is Phosphatidylinositol-3,5-bisphosphate 3-phosphatase mtm-1 (Caenorhabditis elegans).